We begin with the raw amino-acid sequence, 479 residues long: Hydrogenase-4 component D (479 aa).

15 helical membrane passes run 3-23 (NLAL…SFSP), 30-50 (WGVL…SAFY), 55-75 (VAVT…LVID), 80-100 (LILF…TGYL), 117-137 (AFLL…TLLG), 168-188 (ALLI…TLFL), 208-228 (LVYG…PMQA), 238-258 (TPIS…YIFA), 270-290 (VIGG…FLMY), 300-320 (LAWS…LSIF), 330-350 (IAYI…AGAL), 369-389 (LPLP…VPPF), 390-410 (NGFF…VEYW), 411-431 (ILLP…AWFI), and 458-478 (LVLI…ATWL).

This sequence belongs to the complex I subunit 5 family.

The protein localises to the cell inner membrane. Its function is as follows. Possible component of hydrogenase 4. In Escherichia coli (strain K12), this protein is Hydrogenase-4 component D.